Reading from the N-terminus, the 226-residue chain is Neuromodulin (226 aa).

A disordered region spans residues 1 to 226 (MLCCMRRTKQ…EDPEADQEHA (226 aa)). 2 S-palmitoyl cysteine lipidation sites follow: C3 and C4. A compositionally biased stretch (basic and acidic residues) spans 9 to 32 (KQVEKNDEDQKIEQDGVKPEDKAH). Positions 31 to 60 (AHKAATKIQASFRGHITRKKLKDEKKGDAP) constitute an IQ domain. Position 41 is a phosphoserine; by PHK and PKC (S41). Positions 51–84 (LKDEKKGDAPAAEAEAKEKDDAPVADGVEKKEGD) are enriched in basic and acidic residues. Over residues 85 to 97 (GSATTDAAPATSP) the composition is skewed to low complexity. S86 and S96 each carry phosphoserine. The segment covering 98-127 (KAEEPSKAGDAPSEEKKGEGDAAPSEEKAG) has biased composition (basic and acidic residues). Over residues 128–139 (SAETESAAKATT) the composition is skewed to low complexity. A phosphoserine mark is found at S142, S144, and S145. Positions 146 to 158 (KAEDGPAKEEPKQ) are enriched in basic and acidic residues. Low complexity predominate over residues 159–192 (ADVPAAVTDAAATTPAAEDAAKAAQPPTETAESS). T172 bears the Phosphothreonine mark. Residues S191 and S192 each carry the phosphoserine modification. Residues 201-214 (VDEAKPKESARQDE) are compositionally biased toward basic and acidic residues. Residues 215–226 (GKEDPEADQEHA) show a composition bias toward acidic residues.

This sequence belongs to the neuromodulin family. As to quaternary structure, identified in a complex containing FGFR4, NCAM1, CDH2, PLCG1, FRS2, SRC, SHC1, GAP43 and CTTN. Interacts (via IQ domain) with calmodulin. Binds calmodulin with a greater affinity in the absence of Ca(2+) than in its presence. Phosphorylated. Phosphorylation of this protein by a protein kinase C is specifically correlated with certain forms of synaptic plasticity. Post-translationally, palmitoylated by ZDHHC3. Palmitoylation is regulated by ARF6 and is essential for plasma membrane association and axonal and dendritic filopodia induction. Deacylated by LYPLA2. Expressed in hippocampal neurons, with highest levels of expression in the CA4 and CA3 neurons and lower levels in CA1 neurons. Expressed in the dorsal root ganglion.

The protein localises to the cell membrane. Its subcellular location is the cell projection. It localises to the growth cone. The protein resides in the growth cone membrane. It is found in the synapse. The protein localises to the filopodium membrane. Its subcellular location is the perikaryon. It localises to the dendrite. The protein resides in the axon. It is found in the cytoplasm. Functionally, this protein is associated with nerve growth. It is a major component of the motile 'growth cones' that form the tips of elongating axons. Plays a role in axonal and dendritic filopodia induction. In Rattus norvegicus (Rat), this protein is Neuromodulin (Gap43).